A 955-amino-acid polypeptide reads, in one-letter code: Disintegrin and metalloproteinase domain-containing protein 19 (955 aa).

An N-terminal signal peptide occupies residues Met1–Ala25. The propeptide occupies Arg26 to Lys202. A Cysteine switch motif is present at residues Ser130 to Gly137. Cys132 is a binding site for Zn(2+). The N-linked (GlcNAc...) asparagine glycan is linked to Asn144. Over Arg203–Ser699 the chain is Extracellular. Positions Lys210–Pro408 constitute a Peptidase M12B domain. 3 disulfide bridges follow: Cys320-Cys403, Cys360-Cys387, and Cys361-Cys370. His345 contacts Zn(2+). Residue Glu346 is part of the active site. Positions 349 and 355 each coordinate Zn(2+). The Disintegrin domain occupies Gly416–Asp502. 2 N-linked (GlcNAc...) asparagine glycosylation sites follow: Asn444 and Asn447. Cys474 and Cys494 are disulfide-bonded. N-linked (GlcNAc...) asparagine glycosylation is present at Asn645. The EGF-like domain maps to Glu650 to Asn682. Intrachain disulfides connect Cys654-Cys664, Cys658-Cys670, and Cys672-Cys681. The chain crosses the membrane as a helical span at residues Val700–Met720. At Tyr721–Ala955 the chain is on the cytoplasmic side. A compositionally biased stretch (polar residues) spans Ser753 to Gln771. Residues Ser753–Leu917 form a disordered region. Pro residues-rich tracts occupy residues Ser787 to Asp796 and Arg833 to Pro844. The SH3-binding motif lies at Arg833–Pro844.

In terms of assembly, interacts with SH3PXD2A. The cofactor is Zn(2+). The precursor is cleaved by a furin endopeptidase. Expressed in many normal organ tissues and several cancer cell lines.

The protein resides in the membrane. Its function is as follows. Participates in the proteolytic processing of beta-type neuregulin isoforms which are involved in neurogenesis and synaptogenesis, suggesting a regulatory role in glial cell. Also cleaves alpha-2 macroglobulin. May be involved in osteoblast differentiation and/or osteoblast activity in bone. This is Disintegrin and metalloproteinase domain-containing protein 19 (ADAM19) from Homo sapiens (Human).